A 302-amino-acid polypeptide reads, in one-letter code: Sulfate adenylyltransferase subunit 2 (302 aa).

A disordered region spans residues 280–302 (RQGRLIDSDQSASMEQKKRQGYF).

This sequence belongs to the PAPS reductase family. CysD subfamily. Heterodimer composed of CysD, the smaller subunit, and CysN.

It carries out the reaction sulfate + ATP + H(+) = adenosine 5'-phosphosulfate + diphosphate. Its pathway is sulfur metabolism; hydrogen sulfide biosynthesis; sulfite from sulfate: step 1/3. Functionally, with CysN forms the ATP sulfurylase (ATPS) that catalyzes the adenylation of sulfate producing adenosine 5'-phosphosulfate (APS) and diphosphate, the first enzymatic step in sulfur assimilation pathway. APS synthesis involves the formation of a high-energy phosphoric-sulfuric acid anhydride bond driven by GTP hydrolysis by CysN coupled to ATP hydrolysis by CysD. The protein is Sulfate adenylyltransferase subunit 2 of Shewanella baltica (strain OS195).